Consider the following 256-residue polypeptide: 4-hydroxy-tetrahydrodipicolinate reductase (256 aa).

Position 8–13 (8–13) interacts with NAD(+); the sequence is GASGKM. Lysine 36 contributes to the NADP(+) binding site. NAD(+) is bound by residues 87-89 and 111-114; these read GTT and ATNM. Histidine 143 (proton donor/acceptor) is an active-site residue. Histidine 144 serves as a coordination point for (S)-2,3,4,5-tetrahydrodipicolinate. Catalysis depends on lysine 147, which acts as the Proton donor. 153 to 154 lines the (S)-2,3,4,5-tetrahydrodipicolinate pocket; the sequence is GT.

It belongs to the DapB family.

Its subcellular location is the cytoplasm. The enzyme catalyses (S)-2,3,4,5-tetrahydrodipicolinate + NAD(+) + H2O = (2S,4S)-4-hydroxy-2,3,4,5-tetrahydrodipicolinate + NADH + H(+). The catalysed reaction is (S)-2,3,4,5-tetrahydrodipicolinate + NADP(+) + H2O = (2S,4S)-4-hydroxy-2,3,4,5-tetrahydrodipicolinate + NADPH + H(+). The protein operates within amino-acid biosynthesis; L-lysine biosynthesis via DAP pathway; (S)-tetrahydrodipicolinate from L-aspartate: step 4/4. Its function is as follows. Catalyzes the conversion of 4-hydroxy-tetrahydrodipicolinate (HTPA) to tetrahydrodipicolinate. The sequence is that of 4-hydroxy-tetrahydrodipicolinate reductase from Campylobacter concisus (strain 13826).